Consider the following 494-residue polypeptide: Glycerol kinase (494 aa).

Threonine 13 contacts ADP. The ATP site is built by threonine 13, threonine 14, and serine 15. Position 13 (threonine 13) interacts with sn-glycerol 3-phosphate. Arginine 17 is a binding site for ADP. Residues arginine 83, glutamate 84, tyrosine 135, and aspartate 244 each contribute to the sn-glycerol 3-phosphate site. 5 residues coordinate glycerol: arginine 83, glutamate 84, tyrosine 135, aspartate 244, and glutamine 245. ADP-binding residues include threonine 266 and glycine 309. ATP contacts are provided by threonine 266, glycine 309, glutamine 313, and glycine 410. Positions 410 and 414 each coordinate ADP.

The protein belongs to the FGGY kinase family.

It carries out the reaction glycerol + ATP = sn-glycerol 3-phosphate + ADP + H(+). Its pathway is polyol metabolism; glycerol degradation via glycerol kinase pathway; sn-glycerol 3-phosphate from glycerol: step 1/1. Its activity is regulated as follows. Inhibited by fructose 1,6-bisphosphate (FBP). Functionally, key enzyme in the regulation of glycerol uptake and metabolism. Catalyzes the phosphorylation of glycerol to yield sn-glycerol 3-phosphate. This Shewanella oneidensis (strain ATCC 700550 / JCM 31522 / CIP 106686 / LMG 19005 / NCIMB 14063 / MR-1) protein is Glycerol kinase.